Consider the following 205-residue polypeptide: RNA pyrophosphohydrolase (205 aa).

A Nudix hydrolase domain is found at 6 to 149 (GFRPNVGIVL…KRGVYARALR (144 aa)). The Nudix box signature appears at 38-59 (GGMNTDETPVEAMYRELREETG). A disordered region spans residues 178–205 (GSSAAGHDSPRKRPRKRNGARAMRINND). A compositionally biased stretch (basic residues) spans 187-196 (PRKRPRKRNG).

This sequence belongs to the Nudix hydrolase family. RppH subfamily. It depends on a divalent metal cation as a cofactor.

Functionally, accelerates the degradation of transcripts by removing pyrophosphate from the 5'-end of triphosphorylated RNA, leading to a more labile monophosphorylated state that can stimulate subsequent ribonuclease cleavage. The polypeptide is RNA pyrophosphohydrolase (Xanthomonas axonopodis pv. citri (strain 306)).